Consider the following 483-residue polypeptide: MORN repeat-containing protein 1 (483 aa).

Serine 18 carries the post-translational modification Phosphoserine. MORN repeat units lie at residues 39 to 61, 62 to 84, 86 to 108, 109 to 131, 132 to 154, 155 to 177, and 178 to 200; these read YEGE…DGSY, YEGE…WSGN, YSGQ…AGGH, YEGE…DGQV, YQGS…NGDK, YEGD…DGST, and YKGQ…SGVT. A disordered region spans residues 392-427; that stretch reads EKAGNRPKGDRSPPEVLSTAQEPLRGTNRSDGTTAE. Residues 394 to 404 are compositionally biased toward basic and acidic residues; it reads AGNRPKGDRSP. Residue serine 403 is modified to Phosphoserine. The span at 418–427 shows a compositional bias: polar residues; that stretch reads TNRSDGTTAE.

In Rattus norvegicus (Rat), this protein is MORN repeat-containing protein 1 (Morn1).